Reading from the N-terminus, the 714-residue chain is Polyribonucleotide nucleotidyltransferase (714 aa).

Residues Asp-493 and Asp-499 each contribute to the Mg(2+) site. The KH domain occupies 559–618; sequence PRIETTKIPADRIGELIGPGGKNIKAIQAESGADINIEEDGTVHIYAAKQEGLDRALELV. In terms of domain architecture, S1 motif spans 628–696; sequence GELYTGKIVS…DKGRVKMSIR (69 aa).

Belongs to the polyribonucleotide nucleotidyltransferase family. The cofactor is Mg(2+).

It is found in the cytoplasm. It carries out the reaction RNA(n+1) + phosphate = RNA(n) + a ribonucleoside 5'-diphosphate. Functionally, involved in mRNA degradation. Catalyzes the phosphorolysis of single-stranded polyribonucleotides processively in the 3'- to 5'-direction. This chain is Polyribonucleotide nucleotidyltransferase, found in Akkermansia muciniphila (strain ATCC BAA-835 / DSM 22959 / JCM 33894 / BCRC 81048 / CCUG 64013 / CIP 107961 / Muc).